The following is a 403-amino-acid chain: MSEVNRESLEAILPQLKCHFTWNLFREGSMSSHMEDRVCNQVEHLNSEEKATMYDLLAYIKHLDGESKAALECLGQAEDLRKSEHNDQSEIRRLVTWGNYAWIYYHMGRLSEAQAYVDKVRQVCQKFANPYSMECPELECEEGWTRLKCGRNERAKMCFEKALEEKPKDPECSSGMAIAMFRLEEKPEKQFSVDALKQAMELNPQNQYLKVLLALKLLRMGEEAEGERLIKDALGKAPNQTDVLQKAAQFYKKKGNLDRAIELLGKALRSTVNNSPLYSLVMCRYREILEQLQNKGDADSSERRQRMAELRRLTMEFMQKTLQRRRSPLNSYSDLIDFPEVERCYQMVISKESPDVEEEDLYERYCNLQEYHRKSEDLAALECLLQFPRNERSIEKEEVKEQT.

4 TPR repeats span residues 94-127 (LVTWGNYAWIYYHMGRLSEAQAYVDKVRQVCQKF), 136-169 (PELECEEGWTRLKCGRNERAKMCFEKALEEKPKD), 172-206 (CSSGMAIAMFRLEEKPEKQFSVDALKQAMELNPQN), and 241-274 (TDVLQKAAQFYKKKGNLDRAIELLGKALRSTVNN).

This sequence belongs to the IFIT family. As to quaternary structure, component of an interferon-dependent multiprotein complex, at least composed of IFIT1, IFIT2 and IFIT3. Interacts with IFIT1 and IFIT2. Interacts (via N-terminus) with MAVS, TBK1, TRAF6 and RIGI. Interacts with COPS5.

The protein localises to the cytoplasm. The protein resides in the mitochondrion. In terms of biological role, IFN-induced antiviral protein which acts as an inhibitor of cellular as well as viral processes, cell migration, proliferation, signaling, and viral replication. Enhances MAVS-mediated host antiviral responses by serving as an adapter bridging TBK1 to MAVS which leads to the activation of TBK1 and phosphorylation of IRF3 and phosphorylated IRF3 translocates into nucleus to promote antiviral gene transcription. Exhibits an antiproliferative activity via the up-regulation of cell cycle negative regulators CDKN1A/p21 and CDKN1B/p27. Normally, CDKN1B/p27 turnover is regulated by COPS5, which binds CDKN1B/p27 in the nucleus and exports it to the cytoplasm for ubiquitin-dependent degradation. IFIT3 sequesters COPS5 in the cytoplasm, thereby increasing nuclear CDKN1B/p27 protein levels. Up-regulates CDKN1A/p21 by down-regulating MYC, a repressor of CDKN1A/p21. Can negatively regulate the apoptotic effects of IFIT2. The sequence is that of Interferon-induced protein with tetratricopeptide repeats 3 (Ifit3) from Mus musculus (Mouse).